The sequence spans 336 residues: Atypical chemokine receptor 1 (336 aa).

Topologically, residues 1-63 (MGNCLHTAEL…CNLLDDSALP (63 aa)) are extracellular. Residues asparagine 16, asparagine 27, and asparagine 33 are each glycosylated (N-linked (GlcNAc...) asparagine). 2 disulfides stabilise this stretch: cysteine 51-cysteine 276 and cysteine 129-cysteine 195. A helical membrane pass occupies residues 64–84 (FFILTSVLGILASSTVLFILF). Topologically, residues 85–95 (RPLFRWQLCPG) are cytoplasmic. The chain crosses the membrane as a helical span at residues 96–116 (WPVLAQLAVGSALFSIVVPIL). Residues 117–129 (APGLGSTHSSALC) lie on the Extracellular side of the membrane. A helical membrane pass occupies residues 130–153 (SLGYCVWYGSAFAQALLLGCHASL). Topologically, residues 154–166 (GHRLGAGQVPGLT) are cytoplasmic. Residues 167–187 (LGLTVGIWGVAALLTLPVTLA) traverse the membrane as a helical segment. The Extracellular segment spans residues 188–207 (SGASGGLCTPIHSTELKALQ). A helical membrane pass occupies residues 208-228 (ATHTVACLAIFVLLPLGLFGA). Over 229–244 (KGLKKALGMGPGPWMN) the chain is Cytoplasmic. The chain crosses the membrane as a helical span at residues 245 to 265 (ILWAWFIFWWPHGVVLGLDFL). At 266 to 287 (VRSKLLLLSTCLAQQALDLLLN) the chain is on the extracellular side. The chain crosses the membrane as a helical span at residues 288 to 308 (LAEALAILHCVATPLILALFY). The Cytoplasmic portion of the chain corresponds to 309-336 (HQATRTLLPSLPLPEGWSSHLDTLGSKS).

This sequence belongs to the G-protein coupled receptor 1 family. Atypical chemokine receptor subfamily.

Its subcellular location is the early endosome. It localises to the recycling endosome. The protein localises to the membrane. Atypical chemokine receptor that controls chemokine levels and localization via high-affinity chemokine binding that is uncoupled from classic ligand-driven signal transduction cascades, resulting instead in chemokine sequestration, degradation, or transcytosis. Also known as interceptor (internalizing receptor) or chemokine-scavenging receptor or chemokine decoy receptor. Has a promiscuous chemokine-binding profile, interacting with inflammatory chemokines of both the CXC and the CC subfamilies but not with homeostatic chemokines. Acts as a receptor for chemokines including CCL2, CCL5, CCL7, CCL11, CCL13, CCL14, CCL17, CXCL5, CXCL6, IL8/CXCL8, CXCL11, GRO, RANTES, MCP-1 and TARC. May regulate chemokine bioavailability and, consequently, leukocyte recruitment through two distinct mechanisms: when expressed in endothelial cells, it sustains the abluminal to luminal transcytosis of tissue-derived chemokines and their subsequent presentation to circulating leukocytes; when expressed in erythrocytes, serves as blood reservoir of cognate chemokines but also as a chemokine sink, buffering potential surges in plasma chemokine levels. The polypeptide is Atypical chemokine receptor 1 (ACKR1) (Gorilla gorilla gorilla (Western lowland gorilla)).